Reading from the N-terminus, the 252-residue chain is uncharacterized protein (252 aa).

Position 9–33 (9–33 (LITGGSAGIGLELAKRLLELGNEVI)) interacts with NADP(+). Ser-139 lines the substrate pocket. Residue Tyr-152 is the Proton acceptor of the active site.

The protein belongs to the short-chain dehydrogenases/reductases (SDR) family.

The protein localises to the cytoplasm. This is an uncharacterized protein from Bacillus subtilis (strain 168).